The primary structure comprises 472 residues: Adenosylhomocysteinase (472 aa).

Residues Thr60, Asp136, and Glu197 each coordinate substrate. 198–200 (TTT) provides a ligand contact to NAD(+). Substrate-binding residues include Lys227 and Asp231. NAD(+) is bound by residues Asn232, 261–266 (GYGDVG), Glu284, Asn319, 340–342 (IGH), and Asn388.

Belongs to the adenosylhomocysteinase family. It depends on NAD(+) as a cofactor.

It localises to the cytoplasm. The enzyme catalyses S-adenosyl-L-homocysteine + H2O = L-homocysteine + adenosine. It functions in the pathway amino-acid biosynthesis; L-homocysteine biosynthesis; L-homocysteine from S-adenosyl-L-homocysteine: step 1/1. Functionally, may play a key role in the regulation of the intracellular concentration of adenosylhomocysteine. The chain is Adenosylhomocysteinase from Maridesulfovibrio salexigens (strain ATCC 14822 / DSM 2638 / NCIMB 8403 / VKM B-1763) (Desulfovibrio salexigens).